Consider the following 340-residue polypeptide: Phosphate acyltransferase (340 aa).

The protein belongs to the PlsX family. Homodimer. Probably interacts with PlsY.

The protein resides in the cytoplasm. The catalysed reaction is a fatty acyl-[ACP] + phosphate = an acyl phosphate + holo-[ACP]. Its pathway is lipid metabolism; phospholipid metabolism. Catalyzes the reversible formation of acyl-phosphate (acyl-PO(4)) from acyl-[acyl-carrier-protein] (acyl-ACP). This enzyme utilizes acyl-ACP as fatty acyl donor, but not acyl-CoA. The chain is Phosphate acyltransferase from Helicobacter pylori (strain HPAG1).